The chain runs to 449 residues: Phosphoglucosamine mutase (449 aa).

S100 serves as the catalytic Phosphoserine intermediate. Positions 100, 241, 243, and 245 each coordinate Mg(2+). A Phosphoserine modification is found at S100.

This sequence belongs to the phosphohexose mutase family. Mg(2+) is required as a cofactor. In terms of processing, activated by phosphorylation.

It carries out the reaction alpha-D-glucosamine 1-phosphate = D-glucosamine 6-phosphate. Functionally, catalyzes the conversion of glucosamine-6-phosphate to glucosamine-1-phosphate. The sequence is that of Phosphoglucosamine mutase from Clostridium botulinum (strain Langeland / NCTC 10281 / Type F).